The sequence spans 150 residues: Large ribosomal subunit protein bL9 (150 aa).

Belongs to the bacterial ribosomal protein bL9 family.

Functionally, binds to the 23S rRNA. In Mycoplasma genitalium (strain ATCC 33530 / DSM 19775 / NCTC 10195 / G37) (Mycoplasmoides genitalium), this protein is Large ribosomal subunit protein bL9.